Here is a 163-residue protein sequence, read N- to C-terminus: Putative defense protein 3 (163 aa).

The first 18 residues, 1–18 (MMFAYIVAVVSALALTSA), serve as a signal peptide directing secretion. The Reelin domain maps to 19–163 (YPTGAPSSTC…SAPVTVLSHK (145 aa)). A disulfide bridge connects residues Cys-28 and Cys-103.

Belongs to the insect defense protein family.

Its subcellular location is the secreted. May have antimicrobial activity. In Antheraea mylitta (Tasar silkworm), this protein is Putative defense protein 3.